The chain runs to 316 residues: Aspartate carbamoyltransferase catalytic subunit (316 aa).

Positions 56 and 57 each coordinate carbamoyl phosphate. Position 84 (K84) interacts with L-aspartate. Carbamoyl phosphate-binding residues include R106, H139, and Q142. L-aspartate-binding residues include R172 and R224. Residues G268 and P269 each coordinate carbamoyl phosphate.

This sequence belongs to the aspartate/ornithine carbamoyltransferase superfamily. ATCase family. As to quaternary structure, heterododecamer (2C3:3R2) of six catalytic PyrB chains organized as two trimers (C3), and six regulatory PyrI chains organized as three dimers (R2).

It carries out the reaction carbamoyl phosphate + L-aspartate = N-carbamoyl-L-aspartate + phosphate + H(+). It participates in pyrimidine metabolism; UMP biosynthesis via de novo pathway; (S)-dihydroorotate from bicarbonate: step 2/3. In terms of biological role, catalyzes the condensation of carbamoyl phosphate and aspartate to form carbamoyl aspartate and inorganic phosphate, the committed step in the de novo pyrimidine nucleotide biosynthesis pathway. This Ligilactobacillus salivarius (strain UCC118) (Lactobacillus salivarius) protein is Aspartate carbamoyltransferase catalytic subunit.